Reading from the N-terminus, the 134-residue chain is MLSPKRTKFRKQHRGRMKGVSYRGNRICFGRFALQALEPAWITSGQIEAGRRTINRYARRGGKIWVRIFPDKPITMRPAETRMGSGKGSPEYWVSVIRPGRILYEMGGVSETVARAAARIAAYKMPIRTQFVTT.

This sequence belongs to the universal ribosomal protein uL16 family. As to quaternary structure, part of the 50S ribosomal subunit.

The protein resides in the plastid. The protein localises to the chloroplast. This chain is Large ribosomal subunit protein uL16c, found in Pinus thunbergii (Japanese black pine).